Here is a 631-residue protein sequence, read N- to C-terminus: Phosphomethylpyrimidine synthase (631 aa).

Substrate contacts are provided by residues N239, M268, Y297, H333, 353–355, 394–397, and E433; these read SRG and DGLR. H437 serves as a coordination point for Zn(2+). Y460 contacts substrate. A Zn(2+)-binding site is contributed by H501. Residues C581, C584, and C589 each coordinate [4Fe-4S] cluster.

This sequence belongs to the ThiC family. Homodimer. It depends on [4Fe-4S] cluster as a cofactor.

It carries out the reaction 5-amino-1-(5-phospho-beta-D-ribosyl)imidazole + S-adenosyl-L-methionine = 4-amino-2-methyl-5-(phosphooxymethyl)pyrimidine + CO + 5'-deoxyadenosine + formate + L-methionine + 3 H(+). It functions in the pathway cofactor biosynthesis; thiamine diphosphate biosynthesis. Its function is as follows. Catalyzes the synthesis of the hydroxymethylpyrimidine phosphate (HMP-P) moiety of thiamine from aminoimidazole ribotide (AIR) in a radical S-adenosyl-L-methionine (SAM)-dependent reaction. In Salmonella arizonae (strain ATCC BAA-731 / CDC346-86 / RSK2980), this protein is Phosphomethylpyrimidine synthase.